The following is a 273-amino-acid chain: Ribosomal RNA small subunit methyltransferase A (273 aa).

S-adenosyl-L-methionine is bound by residues N23, I25, G50, E72, D97, and N116.

Belongs to the class I-like SAM-binding methyltransferase superfamily. rRNA adenine N(6)-methyltransferase family. RsmA subfamily.

Its subcellular location is the cytoplasm. It catalyses the reaction adenosine(1518)/adenosine(1519) in 16S rRNA + 4 S-adenosyl-L-methionine = N(6)-dimethyladenosine(1518)/N(6)-dimethyladenosine(1519) in 16S rRNA + 4 S-adenosyl-L-homocysteine + 4 H(+). In terms of biological role, specifically dimethylates two adjacent adenosines (A1518 and A1519) in the loop of a conserved hairpin near the 3'-end of 16S rRNA in the 30S particle. May play a critical role in biogenesis of 30S subunits. The protein is Ribosomal RNA small subunit methyltransferase A of Rickettsia akari (strain Hartford).